Consider the following 522-residue polypeptide: MSFSRSAADAADTLPDLAATLGAPALGAFVTLGDAFHTRLPAAPLPAPYVVGCSDEVAQLLGLPASFATQPGFAELFAGNPTRDWPAHALPYASVYSGHQFGVWAGQLGDGRALTIGELPGTDGRRYELQIKGGGRTPYSRMGDGRAVLRSSIREFLCSEAMHHLGIPTTRALTVIGSDQPVVREEIETSAVVTRVSESFVRFGHFEHFFSNDRPDLLRQLADHVIDRFYPACREADDPYLALLEAATLRTADLVAQWQAVGFCHGVMNTDNMSILGLTIDYGPFGFVDAFDANHICNHSDTSGRYAYRMQPRIAHWNCYCLAQALLPLIGLQHGIADDDARAERAVDDAQAVLAKFPERFGPALERAMRAKLGLELERENDAELANKLLETMHASHADFTLTFRRLAQLSKHDASRDAPVRDLFIDRDAFDAWANLYRERLSEETRDDAARAAAMNRVNPKYVLRNHLAEVAIRRAKEKDFSEVERLAQVLRRPFDEQPEHEAYAALPPDWAGSLEVSCSS.

ATP contacts are provided by G109, G111, R112, K132, D144, G145, R195, and R202. The active-site Proton acceptor is the D271. Mg(2+) is bound by residues N272 and D281. D281 is an ATP binding site.

It belongs to the SELO family. The cofactor is Mg(2+). Mn(2+) is required as a cofactor.

It carries out the reaction L-seryl-[protein] + ATP = 3-O-(5'-adenylyl)-L-seryl-[protein] + diphosphate. It catalyses the reaction L-threonyl-[protein] + ATP = 3-O-(5'-adenylyl)-L-threonyl-[protein] + diphosphate. The enzyme catalyses L-tyrosyl-[protein] + ATP = O-(5'-adenylyl)-L-tyrosyl-[protein] + diphosphate. The catalysed reaction is L-histidyl-[protein] + UTP = N(tele)-(5'-uridylyl)-L-histidyl-[protein] + diphosphate. It carries out the reaction L-seryl-[protein] + UTP = O-(5'-uridylyl)-L-seryl-[protein] + diphosphate. It catalyses the reaction L-tyrosyl-[protein] + UTP = O-(5'-uridylyl)-L-tyrosyl-[protein] + diphosphate. In terms of biological role, nucleotidyltransferase involved in the post-translational modification of proteins. It can catalyze the addition of adenosine monophosphate (AMP) or uridine monophosphate (UMP) to a protein, resulting in modifications known as AMPylation and UMPylation. This is Protein nucleotidyltransferase YdiU from Burkholderia ambifaria (strain ATCC BAA-244 / DSM 16087 / CCUG 44356 / LMG 19182 / AMMD) (Burkholderia cepacia (strain AMMD)).